The sequence spans 336 residues: Peroxidase 20 (336 aa).

The signal sequence occupies residues 1 to 24 (MEIKQKKVWLSLIVLYAITTSVLG). Disulfide bonds link Cys-39–Cys-119, Cys-72–Cys-77, Cys-125–Cys-331, and Cys-204–Cys-239. The active-site Proton acceptor is the His-70. Residues Asp-71, Val-74, Gly-76, Asp-78, and Ser-80 each contribute to the Ca(2+) site. Substrate is bound at residue Pro-167. An N-linked (GlcNAc...) asparagine glycan is attached at Asn-170. Residue His-197 participates in heme b binding. Residue Thr-198 participates in Ca(2+) binding. Positions 252, 255, and 260 each coordinate Ca(2+).

This sequence belongs to the peroxidase family. Classical plant (class III) peroxidase subfamily. Heme b is required as a cofactor. The cofactor is Ca(2+).

The protein localises to the secreted. The catalysed reaction is 2 a phenolic donor + H2O2 = 2 a phenolic radical donor + 2 H2O. Functionally, removal of H(2)O(2), oxidation of toxic reductants, biosynthesis and degradation of lignin, suberization, auxin catabolism, response to environmental stresses such as wounding, pathogen attack and oxidative stress. These functions might be dependent on each isozyme/isoform in each plant tissue. Its function is as follows. May be implicated in the systemic acquired resistance response via the salicylic acid signal transduction pathway. The polypeptide is Peroxidase 20 (PER20) (Arabidopsis thaliana (Mouse-ear cress)).